The following is a 270-amino-acid chain: Hydroxyethylthiazole kinase (270 aa).

M47 lines the substrate pocket. The ATP site is built by R123 and T169. Substrate is bound at residue G196.

Belongs to the Thz kinase family. Mg(2+) is required as a cofactor.

It catalyses the reaction 5-(2-hydroxyethyl)-4-methylthiazole + ATP = 4-methyl-5-(2-phosphooxyethyl)-thiazole + ADP + H(+). It participates in cofactor biosynthesis; thiamine diphosphate biosynthesis; 4-methyl-5-(2-phosphoethyl)-thiazole from 5-(2-hydroxyethyl)-4-methylthiazole: step 1/1. In terms of biological role, catalyzes the phosphorylation of the hydroxyl group of 4-methyl-5-beta-hydroxyethylthiazole (THZ). The polypeptide is Hydroxyethylthiazole kinase (Roseiflexus castenholzii (strain DSM 13941 / HLO8)).